We begin with the raw amino-acid sequence, 148 residues long: Large ribosomal subunit protein bL9 (148 aa).

This sequence belongs to the bacterial ribosomal protein bL9 family.

Functionally, binds to the 23S rRNA. The chain is Large ribosomal subunit protein bL9 from Pseudomonas putida (strain ATCC 700007 / DSM 6899 / JCM 31910 / BCRC 17059 / LMG 24140 / F1).